The sequence spans 764 residues: 5-methyltetrahydropteroyltriglutamate--homocysteine methyltransferase (764 aa).

Residues arginine 16–lysine 19 and lysine 115 contribute to the 5-methyltetrahydropteroyltri-L-glutamate site. L-homocysteine is bound by residues isoleucine 435 to serine 437 and glutamate 488. Residues isoleucine 435–serine 437 and glutamate 488 contribute to the L-methionine site. Residues arginine 519–cysteine 520 and tryptophan 565 contribute to the 5-methyltetrahydropteroyltri-L-glutamate site. L-homocysteine is bound at residue aspartate 603. Position 603 (aspartate 603) interacts with L-methionine. Glutamate 609 provides a ligand contact to 5-methyltetrahydropteroyltri-L-glutamate. 3 residues coordinate Zn(2+): histidine 645, cysteine 647, and glutamate 669. The active-site Proton donor is the histidine 698. Cysteine 730 is a binding site for Zn(2+).

This sequence belongs to the vitamin-B12 independent methionine synthase family. Requires Zn(2+) as cofactor.

It carries out the reaction 5-methyltetrahydropteroyltri-L-glutamate + L-homocysteine = tetrahydropteroyltri-L-glutamate + L-methionine. It participates in amino-acid biosynthesis; L-methionine biosynthesis via de novo pathway; L-methionine from L-homocysteine (MetE route): step 1/1. Catalyzes the transfer of a methyl group from 5-methyltetrahydrofolate to homocysteine resulting in methionine formation. In Burkholderia pseudomallei (strain 1106a), this protein is 5-methyltetrahydropteroyltriglutamate--homocysteine methyltransferase.